Reading from the N-terminus, the 999-residue chain is Disks large-associated protein 1 (999 aa).

3 disordered regions span residues 155-213, 395-418, and 918-989; these read HSLE…GYWS, MAEDDSGDSDGSPKPSPKMQARRA, and NWRP…DSIE. Over residues 194-204 the composition is skewed to basic and acidic residues; that stretch reads RERCKSAEPKN. Basic and acidic residues-rich tracts occupy residues 923–932 and 947–965; these read DPPERKERRL and LARDRSLESTEKQRQEARK. The span at 976 to 985 shows a compositional bias: polar residues; the sequence is VRQNSATESA. Residues 997 to 999 carry the PDZ-binding motif; the sequence is TRL.

The protein belongs to the SAPAP family.

It localises to the cell membrane. Its subcellular location is the postsynaptic density. The protein localises to the synapse. In terms of biological role, part of the postsynaptic scaffold in neuronal cells. The polypeptide is Disks large-associated protein 1 (Danio rerio (Zebrafish)).